Consider the following 145-residue polypeptide: Peptide methionine sulfoxide reductase MsrB (145 aa).

A MsrB domain is found at Lys-6 to Val-129. Cys-118 acts as the Nucleophile in catalysis.

Belongs to the MsrB Met sulfoxide reductase family.

The enzyme catalyses L-methionyl-[protein] + [thioredoxin]-disulfide + H2O = L-methionyl-(R)-S-oxide-[protein] + [thioredoxin]-dithiol. This Listeria monocytogenes serotype 4b (strain CLIP80459) protein is Peptide methionine sulfoxide reductase MsrB.